An 87-amino-acid chain; its full sequence is Small archaeal modifier protein 1 (87 aa).

G87 bears the 1-thioglycine; alternate mark. At G87 the chain carries Glycyl adenylate; alternate. G87 participates in a covalent cross-link: Glycyl lysine isopeptide (Gly-Lys) (interchain with K-? in acceptor proteins); alternate.

In terms of processing, the C-terminal glycine is likely acyl-adenylated (-COAMP) by UbaA, and also probably thiocarboxylated (-COSH) to function in sulfur transfer.

In terms of biological role, functions as a protein modifier covalently attached to lysine residues of substrate proteins, as well as a sulfur carrier in molybdenum cofactor (MoCo) biosynthesis. The protein modification process is termed sampylation and involves the formation of an isopeptide bond between the SAMP1 C-terminal glycine carboxylate and the epsilon-amino group of lysine residues on target proteins. May serve as a proteolytic signal in the cell to target proteins for degradation by proteasomes. The sequence is that of Small archaeal modifier protein 1 (samp1) from Haloferax volcanii (strain ATCC 29605 / DSM 3757 / JCM 8879 / NBRC 14742 / NCIMB 2012 / VKM B-1768 / DS2) (Halobacterium volcanii).